A 644-amino-acid chain; its full sequence is Threonine--tRNA ligase (644 aa).

Residues 1–61 enclose the TGS domain; sequence MNVSIEGQML…DGTTTIEPVY (61 aa). The segment at 241–532 is catalytic; it reads DHRKLGQQLD…LIEQYAGAFP (292 aa). The Zn(2+) site is built by C333, H384, and H509.

The protein belongs to the class-II aminoacyl-tRNA synthetase family. Homodimer. Zn(2+) is required as a cofactor.

The protein localises to the cytoplasm. It catalyses the reaction tRNA(Thr) + L-threonine + ATP = L-threonyl-tRNA(Thr) + AMP + diphosphate + H(+). Functionally, catalyzes the attachment of threonine to tRNA(Thr) in a two-step reaction: L-threonine is first activated by ATP to form Thr-AMP and then transferred to the acceptor end of tRNA(Thr). Also edits incorrectly charged L-seryl-tRNA(Thr). The chain is Threonine--tRNA ligase from Nitratidesulfovibrio vulgaris (strain ATCC 29579 / DSM 644 / CCUG 34227 / NCIMB 8303 / VKM B-1760 / Hildenborough) (Desulfovibrio vulgaris).